Consider the following 80-residue polypeptide: Pre-core protein X (80 aa).

Positions 2–32 are excised as a propeptide; it reads ALTCRLRFPVPGFRGRMHRRRGMAGHGLTGG. The tract at residues 18–45 is disordered; that stretch reads MHRRRGMAGHGLTGGMRRAHHRRRRASH. Residues 34-45 show a composition bias toward basic residues; the sequence is RRAHHRRRRASH. The propeptide occupies 52–80; it reads ILPLLIPLIAAAIGAVPGIASVALQAQRH.

This sequence belongs to the adenoviridae core protein X family. Interacts with the core-capsid bridging protein; this interaction bridges the virus core to the capsid. In terms of processing, cleaved by the viral protease during virion maturation to form the mature protein.

Its subcellular location is the host nucleus. It is found in the host nucleolus. The protein localises to the virion. Functionally, interacts with the viral DNA and aids in tightly condensing it within the capsid. Cleavage of pre-core protein X may serve to partially relax this structure within the mature virion prior to its entry into the nucleus. The protein is Pre-core protein X of Human adenovirus C serotype 2 (HAdV-2).